The sequence spans 490 residues: (21S)-21-acetyl-1-hydroxy-apo-melianone synthase CYP88A164 (490 aa).

Residues 4–24 (DLLWLILAIVVGTYVVLFGFL) form a helical membrane-spanning segment. C438 is a heme binding site.

Belongs to the cytochrome P450 family. Heme is required as a cofactor. In terms of tissue distribution, mainly expressed in petioles and, to a lower extent, in roots.

Its subcellular location is the membrane. The catalysed reaction is (21S)-21-acetoxyl-apo-melianone + reduced [NADPH--hemoprotein reductase] + O2 = (21S)-21-acetyl-1-hydroxy-apo-melianone + oxidized [NADPH--hemoprotein reductase] + H2O + H(+). Its pathway is secondary metabolite biosynthesis; terpenoid biosynthesis. Its function is as follows. Monooxygenase involved in the biosynthesis of limonoids triterpene natural products such as azadirachtin, an antifeedant widely used as bioinsecticide, and possessing many medicinal applications including anti-tumoral, anti-malarial, anti-rheumatic, antibacterial, anti-inflammatory, anti-pyretic and diuretic effects. Catalyzes the conversion of (21S)-21-acetoxyl-apo-melianone to (21S)-21-acetyl-1-hydroxy-apo-melianone. This is (21S)-21-acetyl-1-hydroxy-apo-melianone synthase CYP88A164 from Melia azedarach (Chinaberry tree).